Here is a 518-residue protein sequence, read N- to C-terminus: Membrane-bound lytic murein transglycosylase F (518 aa).

Positions 1–21 (MKKLKINYLFIGILALLLAVA) are cleaved as a signal peptide. Residues 22-269 (LWPSIPWFGK…RIEEKYLGHG (248 aa)) are non-LT domain. Positions 270-518 (DDFDYVDTRT…SRKGSEEKQN (249 aa)) are LT domain. Glu314 is a catalytic residue.

The protein in the N-terminal section; belongs to the bacterial solute-binding protein 3 family. In the C-terminal section; belongs to the transglycosylase Slt family.

The protein localises to the cell outer membrane. It carries out the reaction Exolytic cleavage of the (1-&gt;4)-beta-glycosidic linkage between N-acetylmuramic acid (MurNAc) and N-acetylglucosamine (GlcNAc) residues in peptidoglycan, from either the reducing or the non-reducing ends of the peptidoglycan chains, with concomitant formation of a 1,6-anhydrobond in the MurNAc residue.. Functionally, murein-degrading enzyme that degrades murein glycan strands and insoluble, high-molecular weight murein sacculi, with the concomitant formation of a 1,6-anhydromuramoyl product. Lytic transglycosylases (LTs) play an integral role in the metabolism of the peptidoglycan (PG) sacculus. Their lytic action creates space within the PG sacculus to allow for its expansion as well as for the insertion of various structures such as secretion systems and flagella. The polypeptide is Membrane-bound lytic murein transglycosylase F (Shigella boydii serotype 18 (strain CDC 3083-94 / BS512)).